The primary structure comprises 307 residues: MLTIPEGILLCFITSGSVLGVLGNGFILHVNCTDCVRQKFSTTGFIFTGLAISRICVICIIISDGYLKLFSPHMVASDAHIIGISYLWIITNHTSTCFATILNLFYFLKIANFSHYIFFCLKRKLNTIFIFLLGCLFISWSVAFPQTVKIFNDKMKHRNTSWKFHLHKSKFIINHILLNLGVIFFCMVAIITSFLLIISLWKHNRKMQLYVSRFKSLNTEVHLKVMKVLISFIILLILHVIGILIETLSFLRYENKLLLILGLNFSSMYPCCHSFILILANNQLKQASLKALKQFKCHKKDKDVRET.

At 1–7 the chain is on the extracellular side; sequence MLTIPEG. A helical membrane pass occupies residues 8 to 28; that stretch reads ILLCFITSGSVLGVLGNGFIL. Topologically, residues 29–41 are cytoplasmic; the sequence is HVNCTDCVRQKFS. The helical transmembrane segment at 42 to 62 threads the bilayer; that stretch reads TTGFIFTGLAISRICVICIII. Topologically, residues 63 to 81 are extracellular; it reads SDGYLKLFSPHMVASDAHI. The chain crosses the membrane as a helical span at residues 82 to 104; the sequence is IGISYLWIITNHTSTCFATILNL. The Cytoplasmic portion of the chain corresponds to 105–124; sequence FYFLKIANFSHYIFFCLKRK. Residues 125 to 145 form a helical membrane-spanning segment; it reads LNTIFIFLLGCLFISWSVAFP. Topologically, residues 146-179 are extracellular; the sequence is QTVKIFNDKMKHRNTSWKFHLHKSKFIINHILLN. Asn159 carries N-linked (GlcNAc...) asparagine glycosylation. A helical membrane pass occupies residues 180–200; that stretch reads LGVIFFCMVAIITSFLLIISL. Topologically, residues 201-227 are cytoplasmic; it reads WKHNRKMQLYVSRFKSLNTEVHLKVMK. Residues 228–248 form a helical membrane-spanning segment; sequence VLISFIILLILHVIGILIETL. The Extracellular segment spans residues 249–257; the sequence is SFLRYENKL. A helical membrane pass occupies residues 258–278; the sequence is LLILGLNFSSMYPCCHSFILI. The Cytoplasmic segment spans residues 279–307; the sequence is LANNQLKQASLKALKQFKCHKKDKDVRET.

Belongs to the G-protein coupled receptor T2R family.

The protein localises to the membrane. In terms of biological role, putative taste receptor which may play a role in the perception of bitterness. The sequence is that of Taste receptor type 2 member 106 from Rattus norvegicus (Rat).